The chain runs to 508 residues: Photosystem II CP47 reaction center protein (508 aa).

6 consecutive transmembrane segments (helical) span residues 21 to 36, 101 to 115, 140 to 156, 203 to 218, 237 to 252, and 457 to 472; these read SVHI…WAGS, IVFS…IWHW, GIHL…FGAF, IAAG…FHLS, VLSS…AFVV, and SFAL…HGSR.

Belongs to the PsbB/PsbC family. PsbB subfamily. As to quaternary structure, PSII is composed of 1 copy each of membrane proteins PsbA, PsbB, PsbC, PsbD, PsbE, PsbF, PsbH, PsbI, PsbJ, PsbK, PsbL, PsbM, PsbT, PsbX, PsbY, PsbZ, Psb30/Ycf12, at least 3 peripheral proteins of the oxygen-evolving complex and a large number of cofactors. It forms dimeric complexes. Requires Binds multiple chlorophylls. PSII binds additional chlorophylls, carotenoids and specific lipids. as cofactor.

It is found in the plastid. Its subcellular location is the chloroplast thylakoid membrane. In terms of biological role, one of the components of the core complex of photosystem II (PSII). It binds chlorophyll and helps catalyze the primary light-induced photochemical processes of PSII. PSII is a light-driven water:plastoquinone oxidoreductase, using light energy to abstract electrons from H(2)O, generating O(2) and a proton gradient subsequently used for ATP formation. The protein is Photosystem II CP47 reaction center protein of Lepidium virginicum (Virginia pepperweed).